The chain runs to 271 residues: Formamidopyrimidine-DNA glycosylase (271 aa).

The active-site Schiff-base intermediate with DNA is the Pro2. Residue Glu3 is the Proton donor of the active site. Residue Lys56 is the Proton donor; for beta-elimination activity of the active site. 3 residues coordinate DNA: His89, Arg107, and Lys151. The FPG-type zinc-finger motif lies at 236–270 (NVYGRAGLQCRQCGTPVRLSRQGQRSTYFCPHCQR). Residue Arg260 is the Proton donor; for delta-elimination activity of the active site.

Belongs to the FPG family. As to quaternary structure, monomer. The cofactor is Zn(2+).

It catalyses the reaction Hydrolysis of DNA containing ring-opened 7-methylguanine residues, releasing 2,6-diamino-4-hydroxy-5-(N-methyl)formamidopyrimidine.. It carries out the reaction 2'-deoxyribonucleotide-(2'-deoxyribose 5'-phosphate)-2'-deoxyribonucleotide-DNA = a 3'-end 2'-deoxyribonucleotide-(2,3-dehydro-2,3-deoxyribose 5'-phosphate)-DNA + a 5'-end 5'-phospho-2'-deoxyribonucleoside-DNA + H(+). Functionally, involved in base excision repair of DNA damaged by oxidation or by mutagenic agents. Acts as a DNA glycosylase that recognizes and removes damaged bases. Has a preference for oxidized purines, such as 7,8-dihydro-8-oxoguanine (8-oxoG). Has AP (apurinic/apyrimidinic) lyase activity and introduces nicks in the DNA strand. Cleaves the DNA backbone by beta-delta elimination to generate a single-strand break at the site of the removed base with both 3'- and 5'-phosphates. This Acidovorax ebreus (strain TPSY) (Diaphorobacter sp. (strain TPSY)) protein is Formamidopyrimidine-DNA glycosylase.